The sequence spans 200 residues: Methylthioribulose-1-phosphate dehydratase (200 aa).

The Zn(2+) site is built by His90 and His92.

The protein belongs to the aldolase class II family. MtnB subfamily. The cofactor is Zn(2+).

The catalysed reaction is 5-(methylsulfanyl)-D-ribulose 1-phosphate = 5-methylsulfanyl-2,3-dioxopentyl phosphate + H2O. The protein operates within amino-acid biosynthesis; L-methionine biosynthesis via salvage pathway; L-methionine from S-methyl-5-thio-alpha-D-ribose 1-phosphate: step 2/6. Catalyzes the dehydration of methylthioribulose-1-phosphate (MTRu-1-P) into 2,3-diketo-5-methylthiopentyl-1-phosphate (DK-MTP-1-P). This is Methylthioribulose-1-phosphate dehydratase from Sodalis glossinidius (strain morsitans).